Here is an 89-residue protein sequence, read N- to C-terminus: Small ribosomal subunit protein uS15 (89 aa).

The protein belongs to the universal ribosomal protein uS15 family. As to quaternary structure, part of the 30S ribosomal subunit. Forms a bridge to the 50S subunit in the 70S ribosome, contacting the 23S rRNA.

One of the primary rRNA binding proteins, it binds directly to 16S rRNA where it helps nucleate assembly of the platform of the 30S subunit by binding and bridging several RNA helices of the 16S rRNA. Functionally, forms an intersubunit bridge (bridge B4) with the 23S rRNA of the 50S subunit in the ribosome. In Enterobacter sp. (strain 638), this protein is Small ribosomal subunit protein uS15.